The primary structure comprises 124 residues: Hydrogenase maturation factor HypA (124 aa).

H2 contributes to the Ni(2+) binding site. Zn(2+)-binding residues include C78, C81, C97, and C100.

It belongs to the HypA/HybF family.

Involved in the maturation of [NiFe] hydrogenases. Required for nickel insertion into the metal center of the hydrogenase. The sequence is that of Hydrogenase maturation factor HypA from Methanococcus vannielii (strain ATCC 35089 / DSM 1224 / JCM 13029 / OCM 148 / SB).